The following is a 437-amino-acid chain: Septin-7 (437 aa).

S2 carries the post-translational modification N-acetylserine. Y30 is modified (phosphotyrosine). One can recognise a Septin-type G domain in the interval 47–316 (RGFEFTLMVV…ENYRSRKLAA (270 aa)). The interval 47–317 (RGFEFTLMVV…NYRSRKLAAV (271 aa)) is interaction with SEPTIN12. Residues 57–64 (GESGLGKS) are G1 motif. 57–64 (GESGLGKS) contacts GTP. Position 77 is a phosphoserine (S77). GTP contacts are provided by residues T90, G116, and 195–203 (KADTLTPEE). The tract at residues 113-116 (DTPG) is G3 motif. The tract at residues 194-197 (AKAD) is G4 motif. T228 is subject to Phosphothreonine. GTP contacts are provided by G250 and R265. The stretch at 332-433 (TKSPLAQMEE…SRTLEKNKKK (102 aa)) forms a coiled coil. S334 carries the phosphoserine modification. K373 bears the N6-acetyllysine mark. Over residues 378–410 (ELQRRHEQMKKNLEAQHKELEEKRRQFEDEKAN) the composition is skewed to basic and acidic residues. The interval 378 to 437 (ELQRRHEQMKKNLEAQHKELEEKRRQFEDEKANWEAQQRILEQQNSSRTLEKNKKKGKIF) is disordered. Position 424 is a phosphoserine (S424). T426 carries the phosphothreonine modification.

It belongs to the TRAFAC class TrmE-Era-EngA-EngB-Septin-like GTPase superfamily. Septin GTPase family. In terms of assembly, septins polymerize into heterooligomeric protein complexes that form filaments, and associate with cellular membranes, actin filaments and microtubules. GTPase activity is required for filament formation. Filaments are assembled from asymmetrical heterotrimers, composed of SEPTIN2, SEPTIN6 and SEPTIN7 that associate head-to-head to form a hexameric unit. Within the trimer, directly interacts with SEPTIN6, while interaction with SEPTIN2 seems indirect. In the absence of SEPTIN6, forms homodimers. Interacts directly with CENPE and links CENPE to septin filaments composed of SEPTIN2, SEPTIN6 and SEPTIN7. Interacts with SEPTIN5, SEPTIN8, SEPTIN9 and SEPTIN11. Component of a septin core octameric complex consisting of SEPTIN12, SEPTIN7, SEPTIN6 and SEPTIN2 or SEPTIN4 in the order 12-7-6-2-2-6-7-12 or 12-7-6-4-4-6-7-12 and located in the sperm annulus; the SEPTIN12:SEPTIN7 association is mediated by the respective GTP-binding domains.

It localises to the cytoplasm. The protein localises to the chromosome. It is found in the centromere. The protein resides in the kinetochore. Its subcellular location is the cytoskeleton. It localises to the spindle. The protein localises to the cleavage furrow. It is found in the midbody. The protein resides in the cilium axoneme. Its subcellular location is the cell projection. It localises to the cilium. The protein localises to the flagellum. Functionally, filament-forming cytoskeletal GTPase. Required for normal organization of the actin cytoskeleton. Required for normal progress through mitosis. Involved in cytokinesis. Required for normal association of CENPE with the kinetochore. Plays a role in ciliogenesis and collective cell movements. Forms a filamentous structure with SEPTIN12, SEPTIN6, SEPTIN2 and probably SEPTIN4 at the sperm annulus which is required for the structural integrity and motility of the sperm tail during postmeiotic differentiation. The protein is Septin-7 of Bos taurus (Bovine).